The primary structure comprises 487 residues: Protein SMG9 (487 aa).

2 disordered regions span residues 30–83 and 136–164; these read EDAA…PPAL and RDKG…LQPP. A compositionally biased stretch (basic and acidic residues) spans 42-70; it reads LKKDRDREQETWDRERDKDRKLERDREAE.

It belongs to the SMG9 family.

Functionally, involved in nonsense-mediated decay (NMD) of mRNAs containing premature stop codons. Probable component of kinase complex containing nonC and recruited to stalled ribosomes. This is Protein SMG9 from Drosophila melanogaster (Fruit fly).